The primary structure comprises 285 residues: N(G),N(G)-dimethylarginine dimethylaminohydrolase 1 (285 aa).

Residue alanine 2 is modified to N-acetylalanine. Leucine 30 contributes to the substrate binding site. The residue at position 33 (serine 33) is a Phosphoserine. Substrate is bound by residues aspartate 73, glutamate 78, aspartate 79, arginine 98, and arginine 145. Histidine 173 functions as the Proton donor in the catalytic mechanism. Cysteine 222 carries the S-nitrosocysteine modification. A substrate-binding site is contributed by valine 268. Cysteine 274 is subject to S-nitrosocysteine. Residue cysteine 274 is the Nucleophile of the active site. Cysteine 274 is a binding site for Zn(2+).

The protein belongs to the DDAH family. As to quaternary structure, monomer. Detected in red blood cells (at protein level). Widely distributed, high amounts found in kidney, brain, aorta and pancreas.

It carries out the reaction N(omega),N(omega)-dimethyl-L-arginine + H2O = dimethylamine + L-citrulline. The catalysed reaction is N(omega)-methyl-L-arginine + H2O = L-citrulline + methylamine. Inhibited by zinc ions. In terms of biological role, hydrolyzes N(G),N(G)-dimethyl-L-arginine (ADMA) and N(G)-monomethyl-L-arginine (MMA) which act as inhibitors of NOS. Has therefore a role in the regulation of nitric oxide generation. The polypeptide is N(G),N(G)-dimethylarginine dimethylaminohydrolase 1 (Ddah1) (Rattus norvegicus (Rat)).